The chain runs to 270 residues: Diaminopimelate epimerase (270 aa).

3 residues coordinate substrate: asparagine 15, glutamine 49, and asparagine 66. Residue cysteine 75 is the Proton donor of the active site. Residues 76-77 (GN), asparagine 155, asparagine 187, and 204-205 (ER) each bind substrate. Catalysis depends on cysteine 213, which acts as the Proton acceptor. Residue 214-215 (GS) coordinates substrate.

Belongs to the diaminopimelate epimerase family. In terms of assembly, homodimer.

The protein localises to the cytoplasm. The catalysed reaction is (2S,6S)-2,6-diaminopimelate = meso-2,6-diaminopimelate. It functions in the pathway amino-acid biosynthesis; L-lysine biosynthesis via DAP pathway; DL-2,6-diaminopimelate from LL-2,6-diaminopimelate: step 1/1. Catalyzes the stereoinversion of LL-2,6-diaminopimelate (L,L-DAP) to meso-diaminopimelate (meso-DAP), a precursor of L-lysine and an essential component of the bacterial peptidoglycan. The protein is Diaminopimelate epimerase of Rickettsia felis (strain ATCC VR-1525 / URRWXCal2) (Rickettsia azadi).